The sequence spans 328 residues: COP9 signalosome complex subunit 6 (328 aa).

Residues 42 to 175 (VALHPLVILN…VSVFESVIDI (134 aa)) form the MPN domain.

Belongs to the peptidase M67A family. CSN6 subfamily. In terms of assembly, component of the CSN complex, composed of COPS1/GPS1, COPS2, COPS3, COPS4, COPS5, COPS6, COPS7 (COPS7A or COPS7B), COPS8 and COPS9. In the complex, it probably interacts directly with COPS2, COPS4, COPS5, COPS7 (COPS7A or COPS7B) and COPS9. Interacts with the translation initiation factor EIF3S6. Interacts weakly with RBX1. Directly interacts with COP1 and 14-3-3 protein sigma/SFN. Interacts with ERCC6.

The protein localises to the cytoplasm. The protein resides in the nucleus. Functionally, component of the COP9 signalosome complex (CSN), a complex involved in various cellular and developmental processes. The CSN complex is an essential regulator of the ubiquitin (Ubl) conjugation pathway by mediating the deneddylation of the cullin subunits of SCF-type E3 ligase complexes, leading to decrease the Ubl ligase activity of SCF-type complexes such as SCF, CSA or DDB2. The complex is also involved in phosphorylation of p53/TP53, c-jun/JUN, IkappaBalpha/NFKBIA, ITPK1 and IRF8, possibly via its association with CK2 and PKD kinases. CSN-dependent phosphorylation of TP53 and JUN promotes and protects degradation by the Ubl system, respectively. Has some glucocorticoid receptor-responsive activity. Stabilizes COP1 through reducing COP1 auto-ubiquitination and decelerating COP1 turnover rate, hence regulates the ubiquitination of COP1 targets, including SFN. The sequence is that of COP9 signalosome complex subunit 6 (COPS6) from Pongo abelii (Sumatran orangutan).